A 236-amino-acid polypeptide reads, in one-letter code: 2-C-methyl-D-erythritol 4-phosphate cytidylyltransferase (236 aa).

Belongs to the IspD/TarI cytidylyltransferase family. IspD subfamily.

The catalysed reaction is 2-C-methyl-D-erythritol 4-phosphate + CTP + H(+) = 4-CDP-2-C-methyl-D-erythritol + diphosphate. It participates in isoprenoid biosynthesis; isopentenyl diphosphate biosynthesis via DXP pathway; isopentenyl diphosphate from 1-deoxy-D-xylulose 5-phosphate: step 2/6. In terms of biological role, catalyzes the formation of 4-diphosphocytidyl-2-C-methyl-D-erythritol from CTP and 2-C-methyl-D-erythritol 4-phosphate (MEP). The chain is 2-C-methyl-D-erythritol 4-phosphate cytidylyltransferase from Pseudomonas savastanoi pv. phaseolicola (strain 1448A / Race 6) (Pseudomonas syringae pv. phaseolicola (strain 1448A / Race 6)).